The primary structure comprises 448 residues: MMITLRKLPLAVAVMAGIFAAQASAVDFKGYARSGIGWTGSGGEQQCFQATGAGAKYRLGNECETYAELKLGQEVWKEGDKSFYFDTNVAYSVAQQNDWEATSPAFREANVQGKNLIDALPGSTIWAGKRFYQRHDVHMIDFYYWDISGPGAGIENVDLGFGKLSVAATRSSEAGGSATFQSDSIYDYNKSTANDVFDVRLGSLEVNPGGTLELGVDYGRANARDDYYLADDATKDGWMFTAEHVQTIGTGFNKFVVQYATDALTSQGKGLSQGSGIGISDTDPKFAYAQNNNGHMLRLIDHGSISMGDRWDMMYVGMYQDIDWDNNNGTRWWTVGVRPMFKWTPIMSTLLEVGYDNVKSQRTDETNNQYKITLAQQWQAGDSIWSRPALRVFATYAKWDEKWGYDKTGNPSNNANYGYAVKDGFNGGSFGRGDNDEWTFGAQMEIWW.

An N-terminal signal peptide occupies residues methionine 1 to alanine 25.

It belongs to the porin LamB (TC 1.B.3) family. Homotrimer formed of three 18-stranded antiparallel beta-barrels, containing three independent channels.

The protein resides in the cell outer membrane. It catalyses the reaction beta-maltose(in) = beta-maltose(out). Its function is as follows. Involved in the transport of maltose and maltodextrins. In Cronobacter sakazakii (strain ATCC BAA-894) (Enterobacter sakazakii), this protein is Maltoporin.